We begin with the raw amino-acid sequence, 767 residues long: Photosystem I P700 chlorophyll a apoprotein A1 (767 aa).

A run of 8 helical transmembrane segments spans residues 72–95 (IFSA…FHGA), 158–181 (LMAL…FHYH), 197–221 (LNHH…HVSA), 305–323 (IAHH…GHMY), 364–387 (WHAQ…QHMY), 403–429 (IGLF…IAMV), 451–473 (AIIS…LYIH), and 548–566 (FMVH…LILL). [4Fe-4S] cluster contacts are provided by cysteine 590 and cysteine 599. 2 helical membrane passes run 606-627 (HVFL…HFSW) and 681-703 (TSAY…MFLF). Residue histidine 692 coordinates chlorophyll a'. Chlorophyll a is bound by residues methionine 700 and tyrosine 708. Tryptophan 709 contacts phylloquinone. A helical transmembrane segment spans residues 741 to 761 (AVGVAHYLLGGIATTWAFFHA).

It belongs to the PsaA/PsaB family. The PsaA/B heterodimer binds the P700 chlorophyll special pair and subsequent electron acceptors. PSI consists of a core antenna complex that captures photons, and an electron transfer chain that converts photonic excitation into a charge separation. The cyanobacterial PSI reaction center is composed of one copy each of PsaA,B,C,D,E,F,I,J,K,L,M and X, and forms trimeric complexes. Requires PSI electron transfer chain: 5 chlorophyll a, 1 chlorophyll a', 2 phylloquinones and 3 4Fe-4S clusters. PSI core antenna: 90 chlorophyll a, 22 carotenoids, 3 phospholipids and 1 galactolipid. P700 is a chlorophyll a/chlorophyll a' dimer, A0 is one or more chlorophyll a, A1 is one or both phylloquinones and FX is a shared 4Fe-4S iron-sulfur center. as cofactor.

The protein resides in the cellular thylakoid membrane. It carries out the reaction reduced [plastocyanin] + hnu + oxidized [2Fe-2S]-[ferredoxin] = oxidized [plastocyanin] + reduced [2Fe-2S]-[ferredoxin]. PsaA and PsaB bind P700, the primary electron donor of photosystem I (PSI), as well as the electron acceptors A0, A1 and FX. PSI is a plastocyanin/cytochrome c6-ferredoxin oxidoreductase, converting photonic excitation into a charge separation, which transfers an electron from the donor P700 chlorophyll pair to the spectroscopically characterized acceptors A0, A1, FX, FA and FB in turn. Oxidized P700 is reduced on the lumenal side of the thylakoid membrane by plastocyanin or cytochrome c6. This is Photosystem I P700 chlorophyll a apoprotein A1 from Parasynechococcus marenigrum (strain WH8102).